We begin with the raw amino-acid sequence, 659 residues long: Heparin-sulfate lyase (659 aa).

Positions 1–24 (MTTKIFKRIIVFAVIALSSGNILA) are cleaved as a signal peptide. The active-site Proton acceptor is the Tyr294.

Belongs to the polysaccharide lyase 12 family.

The protein resides in the periplasm. The enzyme catalyses Elimination of sulfate, appears to act on linkages between N-acetyl-D-glucosamine and uronate. Product is an unsaturated sugar.. Specifically cleaves heparan sulfate-rich regions of acidic polysaccharides. Does not act on N,O-desulfated glucosamine or N-acetyl-O-sulfated glucosamine linkages. Functions in cleaving metazoan heparan sulfate and providing carbon, nitrogen and sulfate sources for microorganisms. In Pedobacter heparinus (strain ATCC 13125 / DSM 2366 / CIP 104194 / JCM 7457 / NBRC 12017 / NCIMB 9290 / NRRL B-14731 / HIM 762-3), this protein is Heparin-sulfate lyase (hepC).